Here is a 230-residue protein sequence, read N- to C-terminus: MTDDDRIKLEPGWKNALRAEFDQPYMHQLREFLRQEYAAGKEIYPPGPMIFNALNSTPLEQVKVVILGQDPYHGPGQAHGLCFSVQPGVPTPPSLVNIYKELHRDLNIPIASHGYLQSWAEQGVLLLNTTMTVERANAASHAKKGWEFFTDRIIQVVSEQCPNVVFLLWGAHAQSKQKLIDGTKHLVLKSVHPSPLSAYRGFLGCGHFSRTNGFLEQRGLAPINWALPPL.

The active-site Proton acceptor is aspartate 70.

It belongs to the uracil-DNA glycosylase (UDG) superfamily. UNG family.

Its subcellular location is the cytoplasm. It catalyses the reaction Hydrolyzes single-stranded DNA or mismatched double-stranded DNA and polynucleotides, releasing free uracil.. Its function is as follows. Excises uracil residues from the DNA which can arise as a result of misincorporation of dUMP residues by DNA polymerase or due to deamination of cytosine. This chain is Uracil-DNA glycosylase, found in Pseudomonas putida (strain W619).